The chain runs to 605 residues: Isocitrate dehydrogenase kinase/phosphatase (605 aa).

Residues 327–333 (APGIKGL) and K348 each bind ATP. D383 is an active-site residue.

It belongs to the AceK family.

It is found in the cytoplasm. The catalysed reaction is L-seryl-[isocitrate dehydrogenase] + ATP = O-phospho-L-seryl-[isocitrate dehydrogenase] + ADP + H(+). In terms of biological role, bifunctional enzyme which can phosphorylate or dephosphorylate isocitrate dehydrogenase (IDH) on a specific serine residue. This is a regulatory mechanism which enables bacteria to bypass the Krebs cycle via the glyoxylate shunt in response to the source of carbon. When bacteria are grown on glucose, IDH is fully active and unphosphorylated, but when grown on acetate or ethanol, the activity of IDH declines drastically concomitant with its phosphorylation. The polypeptide is Isocitrate dehydrogenase kinase/phosphatase (Burkholderia lata (strain ATCC 17760 / DSM 23089 / LMG 22485 / NCIMB 9086 / R18194 / 383)).